Here is a 371-residue protein sequence, read N- to C-terminus: Ribosomal RNA small subunit methyltransferase H (371 aa).

S-adenosyl-L-methionine contacts are provided by residues 43–45 (GGH), Asp62, Leu96, Asp110, and Gln117. Residues 315–371 (AAERLDPTQQQRQRTDRERYRRQVRAMHQPGTGSAVRRPVSGDDGTGTDEEGEGHDD) form a disordered region. A compositionally biased stretch (acidic residues) spans 360–371 (TGTDEEGEGHDD).

Belongs to the methyltransferase superfamily. RsmH family.

The protein localises to the cytoplasm. The enzyme catalyses cytidine(1402) in 16S rRNA + S-adenosyl-L-methionine = N(4)-methylcytidine(1402) in 16S rRNA + S-adenosyl-L-homocysteine + H(+). In terms of biological role, specifically methylates the N4 position of cytidine in position 1402 (C1402) of 16S rRNA. The polypeptide is Ribosomal RNA small subunit methyltransferase H (Salinispora tropica (strain ATCC BAA-916 / DSM 44818 / JCM 13857 / NBRC 105044 / CNB-440)).